We begin with the raw amino-acid sequence, 192 residues long: Spermatogenesis-associated protein 3 (192 aa).

Residues 1–15 (MKKVKKKRSEARRHR) show a composition bias toward basic residues. Disordered regions lie at residues 1 to 65 (MKKV…TTSR) and 161 to 184 (SRKPSSHRNACPPSPRNCGCGSGG). A compositionally biased stretch (low complexity) spans 19–59 (SQHASSNSTSQQPSPESTPQQPSPESTPQQPSPESTPQHSS).

Its subcellular location is the cell projection. The protein localises to the cilium. It is found in the flagellum. This is Spermatogenesis-associated protein 3 (SPATA3) from Homo sapiens (Human).